The following is a 444-amino-acid chain: L-seryl-tRNA(Sec) selenium transferase (444 aa).

K284 is modified (N6-(pyridoxal phosphate)lysine).

It belongs to the SelA family. It depends on pyridoxal 5'-phosphate as a cofactor.

Its subcellular location is the cytoplasm. The catalysed reaction is L-seryl-tRNA(Sec) + selenophosphate + H(+) = L-selenocysteinyl-tRNA(Sec) + phosphate. It participates in aminoacyl-tRNA biosynthesis; selenocysteinyl-tRNA(Sec) biosynthesis; selenocysteinyl-tRNA(Sec) from L-seryl-tRNA(Sec) (bacterial route): step 1/1. Converts seryl-tRNA(Sec) to selenocysteinyl-tRNA(Sec) required for selenoprotein biosynthesis. In Wolinella succinogenes (strain ATCC 29543 / DSM 1740 / CCUG 13145 / JCM 31913 / LMG 7466 / NCTC 11488 / FDC 602W) (Vibrio succinogenes), this protein is L-seryl-tRNA(Sec) selenium transferase.